A 283-amino-acid chain; its full sequence is Protease HtpX (283 aa).

The next 2 helical transmembrane spans lie at 4-24 and 33-53; these read ILLF…ILSV and GGIL…SLFL. Position 139 (His-139) interacts with Zn(2+). The active site involves Glu-140. His-143 provides a ligand contact to Zn(2+). The next 2 membrane-spanning stretches (helical) occupy residues 147-167 and 190-210; these read GDMV…IFLS and IYFL…SIIA. Residue Glu-218 participates in Zn(2+) binding.

It belongs to the peptidase M48B family. Zn(2+) serves as cofactor.

It is found in the cell inner membrane. The polypeptide is Protease HtpX (Haemophilus influenzae (strain PittGG)).